We begin with the raw amino-acid sequence, 115 residues long: Immunoglobulin kappa variable 5-48 (115 aa).

The signal sequence occupies residues 1–20 (MVSTPQFLVFLLFWIPASRG). The interval 21–43 (DILLTQSPAILSVSPGERVSFSC) is framework-1. C43 and C108 are disulfide-bonded. The complementarity-determining-1 stretch occupies residues 44 to 54 (RASQSIGTSIH). The tract at residues 55–69 (WYQQRTNGSPRLLIK) is framework-2. Positions 70–76 (YASESIS) are complementarity-determining-2. Residues 77-108 (GIPSRFSGSGSGTDFTLSINSVESEDIADYYC) form a framework-3 region. The tract at residues 109-115 (QQSNSWP) is complementarity-determining-3.

This is Immunoglobulin kappa variable 5-48 from Mus musculus (Mouse).